Reading from the N-terminus, the 628-residue chain is Netrin-4 (628 aa).

The signal sequence occupies residues 1 to 18 (MGSCARLLLLWGCTVVAA). A Laminin N-terminal domain is found at 30–261 (CEKACNPRMG…AIYDFIVKGS (232 aa)). N-linked (GlcNAc...) asparagine glycosylation is found at Asn56 and Asn163. Cystine bridges form between Cys262-Cys271, Cys264-Cys293, Cys295-Cys304, Cys307-Cys329, Cys332-Cys341, Cys334-Cys359, Cys362-Cys371, Cys374-Cys392, Cys395-Cys413, Cys397-Cys420, Cys422-Cys431, and Cys434-Cys446. Laminin EGF-like domains lie at 262-331 (CFCN…ECRT), 332-394 (CKCN…ACKP), and 395-448 (CSCH…GCRP). Residue Asn353 is glycosylated (N-linked (GlcNAc...) asparagine). Asn483 is a glycosylation site (N-linked (GlcNAc...) asparagine). Cystine bridges form between Cys506–Cys576 and Cys520–Cys627. Residues 506-627 (CECKEQTLGN…KVMDILKREC (122 aa)) enclose the NTR domain.

In terms of assembly, may form a homodimer.

It localises to the secreted. Its subcellular location is the extracellular space. The protein localises to the extracellular matrix. In terms of biological role, may play an important role in neural, kidney and vascular development. The chain is Netrin-4 (NTN4) from Pongo abelii (Sumatran orangutan).